We begin with the raw amino-acid sequence, 1379 residues long: ABC multidrug transporter MDR2 (1379 aa).

The helical transmembrane segment at 65 to 85 (IALIVIGTIAGIGAGIPFPLL) threads the bilayer. In terms of domain architecture, ABC transmembrane type-1 1 spans 69-367 (VIGTIAGIGA…MAPFMHIFAS (299 aa)). Residue asparagine 97 is glycosylated (N-linked (GlcNAc...) asparagine). 5 helical membrane passes run 119-139 (VLQV…HTGC), 193-213 (KVGL…VAFL), 215-235 (VATI…MAFG), 301-321 (IQFG…FWQG), and 336-356 (VSVG…FVLS). Positions 403-682 (IELQDVTFNY…DGVYAGMVRL (280 aa)) constitute an ABC transporter 1 domain. An ATP-binding site is contributed by 438–445 (GTSGSGKS). N-linked (GlcNAc...) asparagine glycans are attached at residues asparagine 552 and asparagine 633. The interval 738 to 758 (YMPEEADSLPTEPENEKEKPK) is disordered. Helical transmembrane passes span 781-801 (LGLI…VIFG), 820-840 (GMLF…AVIV), 901-921 (IGVL…SHVI), and 922-942 (AWRI…SGVL). The ABC transmembrane type-1 2 domain occupies 781 to 1068 (LGLITSIMIG…MFALVPDISK (288 aa)). Asparagine 989 is a glycosylation site (N-linked (GlcNAc...) asparagine). The next 2 helical transmembrane spans lie at 1008-1028 (FWLS…YWWG) and 1032-1052 (ILAG…LLFS). The 240-residue stretch at 1135–1374 (VQFRNVHFRY…CESYRANVIH (240 aa)) folds into the ABC transporter 2 domain. 1170–1177 (GPSGSGKS) contacts ATP.

It belongs to the ABC transporter superfamily. ABCB family. Multidrug resistance exporter (TC 3.A.1.201) subfamily.

The protein resides in the cell membrane. In terms of biological role, pleiotropic ABC efflux transporter that may be involved in the modulation susceptibility to a wide range of unrelated cytotoxic compounds. The chain is ABC multidrug transporter MDR2 from Trichophyton equinum (strain ATCC MYA-4606 / CBS 127.97) (Horse ringworm fungus).